The following is a 999-amino-acid chain: Hypoxia up-regulated protein 1 (999 aa).

The N-terminal stretch at 1 to 32 (MADKVRRQRPRRRVCWALVAVLLADLLALSDT) is a signal peptide. Residues N155, N222, and N515 are each glycosylated (N-linked (GlcNAc...) asparagine). S567 carries the post-translational modification Phosphoserine. The segment at 578–694 (GNTISSLFGG…KKQKPARKRR (117 aa)) is disordered. A glycan (N-linked (GlcNAc...) asparagine) is linked at N596. Composition is skewed to basic and acidic residues over residues 611–626 (GSKD…KEEA) and 641–672 (PKGD…KAEA). N-linked (GlcNAc...) asparagine glycans are attached at residues N830, N862, and N869. At K883 the chain carries N6-acetyllysine. The segment at 909 to 999 (AKFTKPRPRP…QKRPLKNDEL (91 aa)) is disordered. N-linked (GlcNAc...) asparagine glycosylation is found at N922 and N931. The Prevents secretion from ER signature appears at 996 to 999 (NDEL).

The protein belongs to the heat shock protein 70 family. In terms of assembly, part of a large chaperone multiprotein complex comprising DNAJB11, HSP90B1, HSPA5, HYOU, PDIA2, PDIA4, PDIA6, PPIB, SDF2L1, UGGT1 and very small amounts of ERP29, but not, or at very low levels, CALR nor CANX. As to expression, highly expressed in tissues that contain well-developed endoplasmic reticulum and synthesize large amounts of secretory proteins. Highly expressed in liver and pancreas and lower expression in brain and kidney. Also expressed in macrophages within aortic atherosclerotic plaques, and in breast cancers.

Its subcellular location is the endoplasmic reticulum lumen. Has a pivotal role in cytoprotective cellular mechanisms triggered by oxygen deprivation. Promotes HSPA5/BiP-mediated ATP nucleotide exchange and thereby activates the unfolded protein response (UPR) pathway in the presence of endoplasmic reticulum stress. May play a role as a molecular chaperone and participate in protein folding. The chain is Hypoxia up-regulated protein 1 (HYOU1) from Homo sapiens (Human).